The primary structure comprises 166 residues: Regulatory protein RecX (166 aa).

Belongs to the RecX family.

The protein resides in the cytoplasm. Functionally, modulates RecA activity. This is Regulatory protein RecX from Escherichia coli (strain K12 / MC4100 / BW2952).